Consider the following 176-residue polypeptide: Large ribosomal subunit protein eL20 (176 aa).

It belongs to the eukaryotic ribosomal protein eL20 family. Component of the large ribosomal subunit.

It is found in the cytoplasm. Its function is as follows. Component of the large ribosomal subunit. The ribosome is a large ribonucleoprotein complex responsible for the synthesis of proteins in the cell. The protein is Large ribosomal subunit protein eL20 (rpl18a) of Salmo salar (Atlantic salmon).